The sequence spans 1177 residues: Solute carrier family 9 member C1 (1177 aa).

Residues M1–E17 lie on the Extracellular side of the membrane. Residues V18–E37 form a helical membrane-spanning segment. Residues D38–P42 lie on the Cytoplasmic side of the membrane. The chain crosses the membrane as a helical span at residues V43–T60. Residues S61–P76 are Extracellular-facing. Residues D77–F93 traverse the membrane as a helical segment. Residues D94–L103 are Cytoplasmic-facing. Residues F104–V129 form a helical membrane-spanning segment. The transport core domain stretch occupies residues F104–D191. Residues N130 to K135 are Extracellular-facing. The helical transmembrane segment at P136–L161 threads the bilayer. At G162–S164 the chain is on the cytoplasmic side. A helical membrane pass occupies residues R165–M190. Residues D191 to L204 are Extracellular-facing. Residues A205–T236 form a helical membrane-spanning segment. The Cytoplasmic segment spans residues V237 to D240. The chain crosses the membrane as a helical span at residues D241–V262. Residues G263–S265 are Extracellular-facing. Residues G266–S279 form a helical membrane-spanning segment. Residues T280–I286 lie on the Cytoplasmic side of the membrane. The chain crosses the membrane as a helical span at residues E287 to Y319. At L320–F324 the chain is on the extracellular side. Residues V325 to R354 traverse the membrane as a helical segment. Residues V325 to L426 form a transport core domain region. The Cytoplasmic segment spans residues V355–S360. Residues W361–F391 traverse the membrane as a helical segment. Over G392 to K395 the chain is Extracellular. Residues E396–L426 form a helical membrane-spanning segment. Topologically, residues G427–E612 are cytoplasmic. The ion transport-like stretch occupies residues Y598 to F678. A helical transmembrane segment spans residues F613–I633. At S634–N637 the chain is on the extracellular side. The chain crosses the membrane as a helical span at residues V638–A664. At A665–F671 the chain is on the cytoplasmic side. A helical membrane pass occupies residues S672–D696. Residues T697–E704 lie on the Extracellular side of the membrane. The chain crosses the membrane as a helical span at residues T705 to L731. Topologically, residues Q732–E1177 are cytoplasmic.

This sequence belongs to the monovalent cation:proton antiporter 1 (CPA1) transporter (TC 2.A.36) family. As to quaternary structure, interacts with soluble adenylyl cyclase (sAC). As to expression, sperm.

The protein localises to the cell projection. It is found in the cilium. Its subcellular location is the flagellum membrane. Functionally, sperm-specific solute carrier involved in intracellular pH regulation of spermatozoa. Required for sperm motility and fertility. Involved in sperm cell hyperactivation, a step needed for sperm motility which is essential late in the preparation of sperm for fertilization. Required for the expression and bicarbonate regulation of the soluble adenylyl cyclase (sAC). This is Solute carrier family 9 member C1 (SLC9C1) from Homo sapiens (Human).